Consider the following 407-residue polypeptide: Triose phosphate/phosphate translocator, chloroplastic (407 aa).

The transit peptide at 1–81 (MESRVLSSGA…VKRDVLKPCS (81 aa)) directs the protein to the chloroplast. Residues 82 to 101 (ATASDSAGDAAPVGFLAKYP) lie on the Chloroplast intermembrane side of the membrane. The helical transmembrane segment at 102-122 (FLVTGFFFFMWYFLNVIFNIL) threads the bilayer. Over 123 to 134 (NKKIYNYFPYPY) the chain is Lumenal. Residues 135–155 (FVSVIHLAVGVVYCLGSWTVG) traverse the membrane as a helical segment. The Chloroplast intermembrane segment spans residues 156 to 212 (LPKRAPVDSNILKLLIPVGFCHALGHVTSNVSFAAVAVSFTHTIKALEPFFNAAASQ). The helical transmembrane segment at 213 to 233 (FVLGQSIPISLWLSLAPVVIG) threads the bilayer. The Lumenal portion of the chain corresponds to 234 to 277 (VSMASLTELSFNWLGFISAMISNISFTYRSIYSKKAMTDMDSTN). A helical membrane pass occupies residues 278–297 (LYAYISIIALLFCIPPAVLF). Topologically, residues 298–375 (EGPQLLKHGF…IVFGNKISTQ (78 aa)) are chloroplast intermembrane. The chain crosses the membrane as a helical span at residues 376 to 396 (TAIGTSIAIAGVAIYSLIKAR). Topologically, residues 397–407 (IEEEKRRMKSA) are lumenal.

Belongs to the TPT transporter family. TPT (TC 2.A.7.9) subfamily. Homodimer.

It localises to the plastid. The protein localises to the chloroplast membrane. Functionally, mediates the export of fixed carbons from the chloroplasts into the cytosol in the form of triose phosphates. In addition, it can also bind and transport phosphoenolpyruvate, thereby increasing the photosynthetic efficiency of C4-plants. The polypeptide is Triose phosphate/phosphate translocator, chloroplastic (TPT) (Flaveria trinervia (Clustered yellowtops)).